Reading from the N-terminus, the 176-residue chain is RNA pyrophosphohydrolase (176 aa).

A Nudix hydrolase domain is found at 6–149 (GYRPNVGIVI…KRDVYRRVMK (144 aa)). The Nudix box signature appears at 38-59 (GGINPGESAEQAMYRELFEEVG).

This sequence belongs to the Nudix hydrolase family. RppH subfamily. The cofactor is a divalent metal cation.

Functionally, accelerates the degradation of transcripts by removing pyrophosphate from the 5'-end of triphosphorylated RNA, leading to a more labile monophosphorylated state that can stimulate subsequent ribonuclease cleavage. This chain is RNA pyrophosphohydrolase, found in Salmonella arizonae (strain ATCC BAA-731 / CDC346-86 / RSK2980).